Consider the following 1461-residue polypeptide: Pleiotropic drug resistance protein 2 (1461 aa).

The region spanning 172-445 is the ABC transporter 1 domain; the sequence is LGLIHLSPSK…FEYMGFRCPE (274 aa). 205-212 is a binding site for ATP; the sequence is GPPGSGKT. Positions 523–736 constitute an ABC transmembrane type-2 1 domain; it reads ELFKSCFTRE…GQNAIAINEF (214 aa). Helical transmembrane passes span 541–561, 577–597, 622–642, 660–680, 685–705, and 771–791; these read FLYIFKTTQITIMATIALTVF, FWGALFFSLINVMFNGMQELA, LPIWVLKIPISLVESAIWIIL, LLAFIGVHQMALSLFRFIAAA, VVANTLGTFTLLMVFILGGFI, and ISIGALFGFSLLFNVLFIAAL. One can recognise an ABC transporter 2 domain in the interval 859 to 1111; it reads LAFNHVNYYV…KLVEYFETIP (253 aa). 904 to 911 provides a ligand contact to ATP; the sequence is GVSGAGKT. An ABC transmembrane type-2 2 domain is found at 1184 to 1398; that stretch reads TQCKACFWKQ…TIYGIFASQV (215 aa). Helical transmembrane passes span 1203 to 1223, 1243 to 1263, 1291 to 1311, 1321 to 1341, 1348 to 1368, 1379 to 1399, and 1430 to 1450; these read YNAIRFFMTVIIGILFGVIFW, YAAVMFLGATNASAVQSVVAI, TIYVAIQTFVYSLLLFSMIGY, FYYFIFMCFTYFSMYGMMVVA, IAAIVMSFFLSFWNLFSGFLI, WYYWASPVAWTIYGIFASQVG, and FLLVVVFAHVGWVLLFFFVFA.

Belongs to the ABC transporter superfamily. ABCG family. PDR (TC 3.A.1.205) subfamily.

The protein resides in the membrane. Functionally, may be a general defense protein. This chain is Pleiotropic drug resistance protein 2 (PDR2), found in Nicotiana plumbaginifolia (Leadwort-leaved tobacco).